Reading from the N-terminus, the 182-residue chain is Negative transcriptional regulator PadR (182 aa).

The protein belongs to the PadR family. As to quaternary structure, homodimer.

Its subcellular location is the cytoplasm. With respect to regulation, padR repressor activity is inhibited in the presence of phenolic acids, which directly modulate PadR binding to the promoter of padC, leading to the dissociation of PadR from the operator DNA and expression of padC. In the presence of MgCl(2), binding is not altered by phenolic acids. In terms of biological role, transcriptional regulator involved in the regulation of the metabolism of phenolic acids. In the absence of phenolic acids, represses the expression of padC, which encodes a phenolic acid decarboxylase (PAD) involved in the detoxification of harmful phenolic acids. Acts by binding to the padC promoter region, preventing the transcription of the gene. This Bacillus subtilis (strain 168) protein is Negative transcriptional regulator PadR.